The chain runs to 244 residues: Uridylate kinase (244 aa).

Position 11–14 (Lys-11–Gly-14) interacts with ATP. The interval Gly-19–Gly-24 is involved in allosteric activation by GTP. Gly-53 is a UMP binding site. 2 residues coordinate ATP: Gly-54 and Arg-58. Residues Asp-73 and Ser-134–Thr-141 each bind UMP. Residues Thr-161, Tyr-167, and Asp-170 each contribute to the ATP site.

This sequence belongs to the UMP kinase family. As to quaternary structure, homohexamer.

The protein resides in the cytoplasm. The catalysed reaction is UMP + ATP = UDP + ADP. Its pathway is pyrimidine metabolism; CTP biosynthesis via de novo pathway; UDP from UMP (UMPK route): step 1/1. Allosterically activated by GTP. Inhibited by UTP. Its function is as follows. Catalyzes the reversible phosphorylation of UMP to UDP. The chain is Uridylate kinase from Trichodesmium erythraeum (strain IMS101).